A 209-amino-acid polypeptide reads, in one-letter code: Ribosomal RNA large subunit methyltransferase E (209 aa).

S-adenosyl-L-methionine contacts are provided by G63, W65, D83, D99, and D124. K164 (proton acceptor) is an active-site residue.

This sequence belongs to the class I-like SAM-binding methyltransferase superfamily. RNA methyltransferase RlmE family.

The protein localises to the cytoplasm. The catalysed reaction is uridine(2552) in 23S rRNA + S-adenosyl-L-methionine = 2'-O-methyluridine(2552) in 23S rRNA + S-adenosyl-L-homocysteine + H(+). Specifically methylates the uridine in position 2552 of 23S rRNA at the 2'-O position of the ribose in the fully assembled 50S ribosomal subunit. The sequence is that of Ribosomal RNA large subunit methyltransferase E from Buchnera aphidicola subsp. Cinara cedri (strain Cc).